The chain runs to 273 residues: Chondrolectin (273 aa).

Residues 1–21 (MSRVVSLLLGAALLCGHGAFC) form the signal peptide. Residues 22–216 (RRVVSGQKVC…VVTEAGIIPN (195 aa)) lie on the Extracellular side of the membrane. The 145-residue stretch at 35–179 (FKHPCYKMAY…CNMKHNYICK (145 aa)) folds into the C-type lectin domain. Intrachain disulfides connect Cys61–Cys178 and Cys144–Cys170. Asn86 carries N-linked (GlcNAc...) asparagine glycosylation. The chain crosses the membrane as a helical span at residues 217 to 237 (LIYVVIPTIPLLLLILVAFGT). The Cytoplasmic segment spans residues 238–273 (CCFQMLHKSKGRTKTSPNQSTLWISKSTRKESGMEV). A disordered region spans residues 248 to 273 (GRTKTSPNQSTLWISKSTRKESGMEV). Residues 251-263 (KTSPNQSTLWISK) show a composition bias toward polar residues.

Interacts with RABGGTB. In terms of processing, N-glycosylated. As to expression, found in spleen, testis, prostate and fetal liver. Expression limited to vascular muscle of testis, smooth muscle of prostate stroma, heart muscle, skeletal muscle, crypts of small intestine, and red pulp of spleen. B lymphocytes express isoform 2 only; peripheral blood T lymphocytes express isoform 3 only; granulocytes and monocytes express neither isoform 2 nor isoform 3. During development of T lymphocytes, bone marrow progenitor cells express isoform 2 only; thymocytes at different stages of maturation express predominantly isoform 2 and weakly isoform 3, and mature thymocytes express only isoform 2.

Its subcellular location is the cytoplasm. It is found in the membrane. The protein resides in the endoplasmic reticulum. It localises to the endoplasmic reticulum membrane. May play a role in the development of the nervous system such as in neurite outgrowth and elongation. May be involved in motor axon growth and guidance. The chain is Chondrolectin (CHODL) from Homo sapiens (Human).